A 530-amino-acid chain; its full sequence is MKSIIFNEIKKILECDFALENPKDKNLAHFATPLAFSLAKELKKSPMLIASDLASKFQNHDCFELVEAVNGYLNFRISKTFLNELANQALTNPNDFTKGEKKQESFLLEYVSANPTGPLHIGHARGAVFGDTLTRLARHLGYKFDTEYYVNDAGNQIYLLGLSILLSVKENILHENVEYPEQYYKGEYIADLAKEAFEKFGKEFFSEENIPSLADWAKDKMLVLIKQNLEQVKIKIDSYVSERSYYDALNATLESLKEHKGIYEQEGKIWLASSQKGDEKDRVIIREDGRGTYLAADIVYHKDKMSRGYGKCINIWGADHHGYIPRMKAAMEFLGFDSNNLEIILAQMVSLLKDGEPYKMSKRAGNFILMSDVVDEIGSDALRYIFLSKKCDTHLEFDISDLQKEDSSNPVYYINYAHARIHQVFAKAGKKIDDVMKADLQSLNQDGVNLLFEALNLKAVLNDAFEARALQKIPDYLKNLAANFHKFYNENKVVGSANENDLLKLFSLVALSIKTAFSLMGIEAKNKMEH.

The short motif at 113–123 (ANPTGPLHIGH) is the 'HIGH' region element.

It belongs to the class-I aminoacyl-tRNA synthetase family. As to quaternary structure, monomer.

The protein localises to the cytoplasm. The catalysed reaction is tRNA(Arg) + L-arginine + ATP = L-arginyl-tRNA(Arg) + AMP + diphosphate. The protein is Arginine--tRNA ligase of Campylobacter jejuni subsp. jejuni serotype O:23/36 (strain 81-176).